We begin with the raw amino-acid sequence, 225 residues long: 3-dehydroquinate dehydratase (225 aa).

Residues Ser-6, 30–32 (EWR), and Arg-62 each bind 3-dehydroquinate. His-118 (proton donor/acceptor) is an active-site residue. The active-site Schiff-base intermediate with substrate is Lys-143. Arg-186, Thr-205, and Gln-209 together coordinate 3-dehydroquinate.

The protein belongs to the type-I 3-dehydroquinase family. In terms of assembly, homodimer.

The enzyme catalyses 3-dehydroquinate = 3-dehydroshikimate + H2O. It participates in metabolic intermediate biosynthesis; chorismate biosynthesis; chorismate from D-erythrose 4-phosphate and phosphoenolpyruvate: step 3/7. Functionally, involved in the third step of the chorismate pathway, which leads to the biosynthesis of aromatic amino acids. Catalyzes the cis-dehydration of 3-dehydroquinate (DHQ) and introduces the first double bond of the aromatic ring to yield 3-dehydroshikimate. The chain is 3-dehydroquinate dehydratase from Streptococcus gordonii (strain Challis / ATCC 35105 / BCRC 15272 / CH1 / DL1 / V288).